Reading from the N-terminus, the 1076-residue chain is Nuclear factor of activated T-cells, cytoplasmic 3 (1076 aa).

Thr-2 is modified (N-acetylthreonine). Residues 110-115 (PSIQIT) form a calcineurin-binding region. Residues 206–307 (LGSPLTSPGG…PGHSPRGSVT (102 aa)) form a disordered region. 2 repeat units span residues 208–224 (SPLT…PGEE) and 237–253 (SPRQ…ITDE). The tract at residues 208-309 (SPLTSPGGSP…HSPRGSVTED (102 aa)) is 3 X SP repeats. The span at 237 to 254 (SPRQSPCHSPRSSITDEN) shows a compositional bias: polar residues. The span at 257 to 271 (SPRPASGPSSRPTSP) shows a compositional bias: low complexity. The short motif at 274 to 276 (KRR) is the Nuclear localization signal element. Residues 293–309 (SPVPSPGHSPRGSVTED) form repeat 3. Phosphoserine is present on Ser-345. Residues 359-390 (CSDDQGSLSPSRETSVDDGLGSQYPLKKDSSG) are disordered. The segment covering 362-371 (DQGSLSPSRE) has biased composition (polar residues). Residue Ser-373 is modified to Phosphoserine. The region spanning 416–597 (SSLPPLDWPL…IPVECSQRSA (182 aa)) is the RHD domain. The DNA-binding element occupies 445 to 452 (RAHYETEG). The Nuclear localization signal signature appears at 687 to 689 (KRK). Disordered stretches follow at residues 700 to 744 (PVLM…ALSA) and 863 to 987 (GHLL…GGLS). Over residues 713–722 (LSSVPSLPVP) the composition is skewed to low complexity. Composition is skewed to polar residues over residues 724–734 (SAQTQRPSSDT) and 888–911 (SAGQ…SHLQ). 2 stretches are compositionally biased toward low complexity: residues 917 to 939 (PSHP…SSPI) and 946 to 965 (QLQS…SPSP). The span at 970–981 (HSGQHSTQAQST) shows a compositional bias: polar residues. Positions 1032–1041 (TLDDVNEIIG) match the Nuclear export signal motif. A disordered region spans residues 1049-1076 (VSQGPEVIRDAPLPGPESPDVMSSNSAQ). Ser-1066 is modified (phosphoserine).

In terms of assembly, NFATC proteins bind to DNA as monomers. Member of the multicomponent NFATC transcription complex that consists of at least two components, a pre-existing cytoplasmic component NFATC2 and an inducible nuclear component NFATC1. Other members such as NFATC4, or members of the activating protein-1 family, MAF, GATA4 and Cbp/p300 can also bind the complex. Component of a promoter-binding complex composed of STAT3, NFATC3 and NFATC4; complex formation is enhanced by calcineurin. Interacts with TRIM17; this interaction prevents NFATC3 nuclear localization. Interacts with and ubiquitinated by STUB1/CHIP; HSPA1A/HSP70 is required as a co-chaperone. Post-translationally, phosphorylated by NFATC-kinase; dephosphorylated by calcineurin. In terms of processing, ubiquitinated by STUB1/CHIP, leading to proteasomal degradation. In terms of tissue distribution, expressed in cardiomyocytes (at protein level).

The protein localises to the cytoplasm. The protein resides in the nucleus. Functionally, acts as a regulator of transcriptional activation. Binds to the TNFSF11/RANKL promoter region and promotes TNFSF11 transcription. Binding to the TNFSF11 promoter region is increased by high levels of Ca(2+) which induce NFATC3 expression and may lead to regulation of TNFSF11 expression in osteoblasts. Plays a role in promoting mesenteric arterial wall remodeling in response to the intermittent hypoxia-induced increase in EDN1 and ROCK signaling. As a result NFATC3 colocalizes with F-actin filaments, translocates to the nucleus and promotes transcription of the smooth muscle hypertrophy and differentiation marker ACTA2. Promotes lipopolysaccharide-induced apoptosis and hypertrophy in cardiomyocytes. Following JAK/STAT signaling activation and as part of a complex with NFATC4 and STAT3, binds to the alpha-beta E4 promoter region of CRYAB and activates transcription in cardiomyocytes. In conjunction with NFATC4, involved in embryonic heart development via maintenance of cardiomyocyte survival, proliferation and differentiation. Plays a role in the inducible expression of cytokine genes in T-cells, especially in the induction of the IL-2. Required for thymocyte maturation during DN3 to DN4 transition and during positive selection. Positively regulates macrophage-derived polymicrobial clearance, via binding to the promoter region and promoting transcription of NOS2 resulting in subsequent generation of nitric oxide. Involved in Ca(2+)-mediated transcriptional responses upon Ca(2+) influx via ORAI1 CRAC channels. The chain is Nuclear factor of activated T-cells, cytoplasmic 3 from Rattus norvegicus (Rat).